The sequence spans 429 residues: C4-dicarboxylate transport protein (429 aa).

The next 8 helical transmembrane spans lie at 9–29 (VLYVQVIFAIIVGVILGHYYP), 45–65 (LIKMVIGPIIFCTVVTGIAGM), 79–99 (LLYFEIVSTFALLLGLAATHI), 149–169 (GEILQILLIALLFGSVLAHLG), 185–205 (VLFGIVHIVTKLAPIGAFGAM), 223–243 (LIGTFYLTSVVFVLVVLGTIA), 308–328 (IYMTMAVLFIAQATNIELTWM), and 356–376 (AATLAVVPTIPLSGMVLILGI).

It belongs to the dicarboxylate/amino acid:cation symporter (DAACS) (TC 2.A.23) family.

The protein localises to the cell inner membrane. Functionally, responsible for the transport of dicarboxylates such as succinate, fumarate, and malate from the periplasm across the membrane. The sequence is that of C4-dicarboxylate transport protein from Burkholderia lata (strain ATCC 17760 / DSM 23089 / LMG 22485 / NCIMB 9086 / R18194 / 383).